An 84-amino-acid chain; its full sequence is UPF0473 protein CLJ_B2791 (84 aa).

It belongs to the UPF0473 family.

This is UPF0473 protein CLJ_B2791 from Clostridium botulinum (strain 657 / Type Ba4).